Reading from the N-terminus, the 282-residue chain is Pantothenate synthetase (282 aa).

30–37 (MGALHAGH) is an ATP binding site. Residue histidine 37 is the Proton donor of the active site. Glutamine 61 serves as a coordination point for (R)-pantoate. Glutamine 61 contributes to the beta-alanine binding site. 147–150 (GEKD) lines the ATP pocket. Residue glutamine 153 participates in (R)-pantoate binding. ATP-binding positions include valine 176 and 184–187 (LSSR).

It belongs to the pantothenate synthetase family. Homodimer.

The protein localises to the cytoplasm. The enzyme catalyses (R)-pantoate + beta-alanine + ATP = (R)-pantothenate + AMP + diphosphate + H(+). It participates in cofactor biosynthesis; (R)-pantothenate biosynthesis; (R)-pantothenate from (R)-pantoate and beta-alanine: step 1/1. Catalyzes the condensation of pantoate with beta-alanine in an ATP-dependent reaction via a pantoyl-adenylate intermediate. The chain is Pantothenate synthetase from Bacteroides thetaiotaomicron (strain ATCC 29148 / DSM 2079 / JCM 5827 / CCUG 10774 / NCTC 10582 / VPI-5482 / E50).